The following is a 116-amino-acid chain: Large ribosomal subunit protein bL20 (116 aa).

This sequence belongs to the bacterial ribosomal protein bL20 family.

Binds directly to 23S ribosomal RNA and is necessary for the in vitro assembly process of the 50S ribosomal subunit. It is not involved in the protein synthesizing functions of that subunit. This Mycoplasmopsis agalactiae (strain NCTC 10123 / CIP 59.7 / PG2) (Mycoplasma agalactiae) protein is Large ribosomal subunit protein bL20.